A 473-amino-acid polypeptide reads, in one-letter code: Putative tyrosine recombinase XerC (473 aa).

Positions 4-82 (MTLPELTQEY…HLRTVYRYAM (79 aa)) constitute a Core-binding (CB) domain. The Tyr recombinase domain occupies 118–305 (RNWLRFLVQE…DYDLMREVMN (188 aa)). Residues R156, K183, H256, R259, and H283 contribute to the active site. Y292 functions as the O-(3'-phospho-DNA)-tyrosine intermediate in the catalytic mechanism. Polar residues predominate over residues 341–352 (SGTELQPATTES). The interval 341-365 (SGTELQPATTESSEAKKADDTASNP) is disordered.

Belongs to the 'phage' integrase family.

The protein localises to the cytoplasm. Functionally, site-specific tyrosine recombinase, which acts by catalyzing the cutting and rejoining of the recombining DNA molecules. The protein is Putative tyrosine recombinase XerC of Pseudomonas syringae.